Consider the following 61-residue polypeptide: Photosystem II reaction center protein K (61 aa).

Residues 1–24 (MPNILSLTCICFNSVIYPTSFFFA) constitute a propeptide that is removed on maturation. Residues 32-52 (IFNPIVDFMPVIPLFFFLLAF) form a helical membrane-spanning segment.

It belongs to the PsbK family. In terms of assembly, PSII is composed of 1 copy each of membrane proteins PsbA, PsbB, PsbC, PsbD, PsbE, PsbF, PsbH, PsbI, PsbJ, PsbK, PsbL, PsbM, PsbT, PsbX, PsbY, PsbZ, Psb30/Ycf12, at least 3 peripheral proteins of the oxygen-evolving complex and a large number of cofactors. It forms dimeric complexes.

Its subcellular location is the plastid. The protein resides in the chloroplast thylakoid membrane. Functionally, one of the components of the core complex of photosystem II (PSII). PSII is a light-driven water:plastoquinone oxidoreductase that uses light energy to abstract electrons from H(2)O, generating O(2) and a proton gradient subsequently used for ATP formation. It consists of a core antenna complex that captures photons, and an electron transfer chain that converts photonic excitation into a charge separation. In Triticum aestivum (Wheat), this protein is Photosystem II reaction center protein K.